An 846-amino-acid polypeptide reads, in one-letter code: Sucrose synthase 6 (846 aa).

The interval 276–755 (CVFTVVIFSI…GLQRIYECYT (480 aa)) is GT-B glycosyltransferase.

Belongs to the glycosyltransferase 1 family. Plant sucrose synthase subfamily.

It catalyses the reaction an NDP-alpha-D-glucose + D-fructose = a ribonucleoside 5'-diphosphate + sucrose + H(+). Functionally, sucrose-cleaving enzyme that provides UDP-glucose and fructose for various metabolic pathways. The sequence is that of Sucrose synthase 6 (SUS6) from Oryza sativa subsp. japonica (Rice).